The sequence spans 180 residues: Large ribosomal subunit protein bL17 (180 aa).

The disordered stretch occupies residues 134–180 (AQAKAKKAAAMPTEESEAKPAEEGDVVGASEPDAKAPEEPPAEAPEN).

Belongs to the bacterial ribosomal protein bL17 family. Part of the 50S ribosomal subunit. Contacts protein L32.

The protein is Large ribosomal subunit protein bL17 of Mycobacterium tuberculosis (strain ATCC 25177 / H37Ra).